A 237-amino-acid chain; its full sequence is Lectin alpha chain (237 aa).

The Mn(2+) site is built by E8 and D10. Positions 10, 12, 14, and 19 each coordinate Ca(2+). Residue Y12 coordinates a carbohydrate. Mn(2+) is bound by residues D19 and H24. 99–100 (LY) is an a carbohydrate binding site. Position 208 (D208) interacts with Ca(2+). R228 lines the a carbohydrate pocket.

Belongs to the leguminous lectin family. In terms of assembly, homotetramer. The beta and gamma chains are produced by partial proteolytic processing of the lectin alpha chain by an asparaginyl endopeptidase.

It is found in the vacuole. Its subcellular location is the aleurone grain. Its function is as follows. D-mannose/D-glucose-binding lectin with hemagglutinating activity towards rabbit and human erythrocytes. In rats, elicits an acute inflammatory response by inducing neutrophil migration and induces dose-dependent paw edema. The sequence is that of Lectin alpha chain from Macropsychanthus wilsonii (Wilson's clusterpea).